We begin with the raw amino-acid sequence, 315 residues long: Vomeronasal type-1 receptor 54 (315 aa).

Over 1-15 (MNKMNRLSHNTEIRN) the chain is Extracellular. Residues 16–40 (AIYSGVGIGISGNSFLLLFHIFKYI) form a helical membrane-spanning segment. Residues 41 to 51 (RGQRSRHIDLP) are Cytoplasmic-facing. The helical transmembrane segment at 52 to 71 (IGLLSLIHLVMLIAMSLVAT) threads the bilayer. Residues 72-90 (DIFMPWGRWGDTTCKCVIS) lie on the Extracellular side of the membrane. Cys-85 and Cys-172 are disulfide-bonded. A helical transmembrane segment spans residues 91-112 (LYRFCRSLSLCATSLLSILQAV). Topologically, residues 113-132 (TLNPRNSCLEKFKRKSPHYM) are cytoplasmic. Residues 133–154 (LGCLLFLSVFYTFISSPLATYI) form a helical membrane-spanning segment. Residues 155-193 (TAKSNLTSPSFTYITTSCSLAPMSYSFHLTVFILLTSRD) are Extracellular-facing. Residues 194–212 (VIFVGLMLLSSGYMVTFLG) traverse the membrane as a helical segment. Topologically, residues 213-239 (RHKKQSQFLHITSFSLKPSAEKRAMRT) are cytoplasmic. The chain crosses the membrane as a helical span at residues 240–260 (ILCLMSFFVLMYTLDSIVSYI). Residues 261–267 (RSIDDGQ) are Extracellular-facing. The chain crosses the membrane as a helical span at residues 268-288 (IFYCVHIFTAHGYATVSPFLI). Over 289 to 315 (LSTEKYIINIFRSTFGRMVTIILLRNR) the chain is Cytoplasmic.

This sequence belongs to the G-protein coupled receptor 1 family.

The protein resides in the cell membrane. Its function is as follows. Putative pheromone receptor implicated in the regulation of social and reproductive behavior. This is Vomeronasal type-1 receptor 54 (Vmn1r54) from Mus musculus (Mouse).